Reading from the N-terminus, the 584-residue chain is Aspartate--tRNA(Asp/Asn) ligase (584 aa).

Glu-177 contacts L-aspartate. The aspartate stretch occupies residues 201–204; sequence QLFK. Arg-223 contacts L-aspartate. ATP contacts are provided by residues 223 to 225 and Gln-232; that span reads RDE. Residue His-447 coordinates L-aspartate. An ATP-binding site is contributed by Glu-481. An L-aspartate-binding site is contributed by Arg-488. Position 533–536 (533–536) interacts with ATP; the sequence is GLDR.

This sequence belongs to the class-II aminoacyl-tRNA synthetase family. Type 1 subfamily. As to quaternary structure, homodimer.

Its subcellular location is the cytoplasm. The catalysed reaction is tRNA(Asx) + L-aspartate + ATP = L-aspartyl-tRNA(Asx) + AMP + diphosphate. Its function is as follows. Aspartyl-tRNA synthetase with relaxed tRNA specificity since it is able to aspartylate not only its cognate tRNA(Asp) but also tRNA(Asn). Reaction proceeds in two steps: L-aspartate is first activated by ATP to form Asp-AMP and then transferred to the acceptor end of tRNA(Asp/Asn). The protein is Aspartate--tRNA(Asp/Asn) ligase of Chlamydia caviae (strain ATCC VR-813 / DSM 19441 / 03DC25 / GPIC) (Chlamydophila caviae).